The chain runs to 212 residues: Thymidylate kinase (212 aa).

10-17 serves as a coordination point for ATP; sequence GIDGCGKT.

This sequence belongs to the thymidylate kinase family.

The catalysed reaction is dTMP + ATP = dTDP + ADP. Functionally, phosphorylation of dTMP to form dTDP in both de novo and salvage pathways of dTTP synthesis. The polypeptide is Thymidylate kinase (Prochlorococcus marinus (strain AS9601)).